Here is a 579-residue protein sequence, read N- to C-terminus: Probable serine/threonine-protein kinase kinY (579 aa).

The disordered stretch occupies residues 1-24 (MINGEQTMVEDELPDQGKPMSDES). Positions 32–309 (LKVGESIGSG…HVLKQLTSLF (278 aa)) constitute a Protein kinase domain. ATP-binding positions include 38–46 (IGSGAYGIV) and Lys59. Catalysis depends on Asp167, which acts as the Proton acceptor.

The protein belongs to the protein kinase superfamily. TKL Ser/Thr protein kinase family.

It catalyses the reaction L-seryl-[protein] + ATP = O-phospho-L-seryl-[protein] + ADP + H(+). It carries out the reaction L-threonyl-[protein] + ATP = O-phospho-L-threonyl-[protein] + ADP + H(+). This Dictyostelium discoideum (Social amoeba) protein is Probable serine/threonine-protein kinase kinY (kinY).